We begin with the raw amino-acid sequence, 548 residues long: T-complex protein 1 subunit theta (548 aa).

The interval 527–548 (QATGGPKPRGPKAQDEDDDGMA) is disordered.

This sequence belongs to the TCP-1 chaperonin family. Heterooligomeric complex.

The protein localises to the cytoplasm. Molecular chaperone; assists the folding of proteins upon ATP hydrolysis. Known to play a role, in vitro, in the folding of actin and tubulin. Required for correct subcellular localization of pgl-1. The chain is T-complex protein 1 subunit theta (cct-8) from Caenorhabditis elegans.